A 576-amino-acid polypeptide reads, in one-letter code: Proline--tRNA ligase (576 aa).

This sequence belongs to the class-II aminoacyl-tRNA synthetase family. ProS type 1 subfamily. As to quaternary structure, homodimer.

It is found in the cytoplasm. The catalysed reaction is tRNA(Pro) + L-proline + ATP = L-prolyl-tRNA(Pro) + AMP + diphosphate. In terms of biological role, catalyzes the attachment of proline to tRNA(Pro) in a two-step reaction: proline is first activated by ATP to form Pro-AMP and then transferred to the acceptor end of tRNA(Pro). As ProRS can inadvertently accommodate and process non-cognate amino acids such as alanine and cysteine, to avoid such errors it has two additional distinct editing activities against alanine. One activity is designated as 'pretransfer' editing and involves the tRNA(Pro)-independent hydrolysis of activated Ala-AMP. The other activity is designated 'posttransfer' editing and involves deacylation of mischarged Ala-tRNA(Pro). The misacylated Cys-tRNA(Pro) is not edited by ProRS. This is Proline--tRNA ligase from Pelobacter propionicus (strain DSM 2379 / NBRC 103807 / OttBd1).